The following is a 497-amino-acid chain: Histidine--tRNA ligase (497 aa).

Belongs to the class-II aminoacyl-tRNA synthetase family. In terms of assembly, homodimer.

The protein localises to the cytoplasm. It catalyses the reaction tRNA(His) + L-histidine + ATP = L-histidyl-tRNA(His) + AMP + diphosphate + H(+). In Dinoroseobacter shibae (strain DSM 16493 / NCIMB 14021 / DFL 12), this protein is Histidine--tRNA ligase.